The primary structure comprises 559 residues: Chromatin assembly factor 1 subunit B (559 aa).

WD repeat units lie at residues 11–54 (HNKE…DGKA), 64–103 (RHTK…EPEQ), 127–166 (GHLE…KISI), 169–208 (EHKS…VAFN), 228–279 (FHDD…RPIA), 299–340 (ELRP…PFGY), and 344–385 (IHYH…IPLK). The tract at residues 386–559 (EKPVLNMRTP…NKGGTESLDP (174 aa)) is disordered. The residue at position 394 (T394) is a Phosphothreonine. At S409 the chain carries Phosphoserine. Position 419 is a phosphothreonine (T419). The residue at position 429 (S429) is a Phosphoserine. Over residues 430 to 444 (PGTTPPQARQAPAPT) the composition is skewed to low complexity. A Phosphothreonine modification is found at T433. S458 carries the phosphoserine modification. Over residues 469–495 (LQPSSQNTKAHPSRRVTLNTLQAWSKT) the composition is skewed to polar residues. N6-acetyllysine is present on K494. A phosphothreonine mark is found at T495, T509, T521, and T531. A compositionally biased stretch (low complexity) spans 509–526 (TPPSSVPTSVISTPSTEE). Phosphoserine is present on S538. The span at 541–552 (ELKRPRLDENKG) shows a compositional bias: basic and acidic residues.

This sequence belongs to the WD repeat HIR1 family. As to quaternary structure, subunit of the CAF-1 complex that contains RBBP4, CHAF1B and CHAF1A. CHAF1A binds directly to CHAF1B. Only minor amounts of RBBP4 are complexed with CHAF1A and CHAF1B in G1 phase. In G2 and S phase also monomeric CHAF1B is detected. Interacts with histones H3.1, H3.2 and H3.1t. Differentially phosphorylated during cell cycle. During mitosis the p60 subunit of inactive CAF-1 is hyperphosphorylated and displaced into the cytosol. Progressivly dephosphorylated from G1 to S and G2 phase. Phosphorylated p60 is recruited to chromatin undergoing DNA repair after UV irradiation in G1, S or G2 phases.

The protein resides in the nucleus. The protein localises to the cytoplasm. In terms of biological role, acts as a component of the histone chaperone complex chromatin assembly factor 1 (CAF-1), which assembles histone octamers onto DNA during replication and repair. CAF-1 performs the first step of the nucleosome assembly process, bringing newly synthesized histones H3 and H4 to replicating DNA; histones H2A/H2B can bind to this chromatin precursor subsequent to DNA replication to complete the histone octamer. The protein is Chromatin assembly factor 1 subunit B of Homo sapiens (Human).